Here is a 550-residue protein sequence, read N- to C-terminus: Glutamine--tRNA ligase (550 aa).

Residues 34-44 (PEPNGYLHLGH) carry the 'HIGH' region motif. ATP-binding positions include 35–37 (EPN) and 41–47 (HLGHAKS). 2 residues coordinate L-glutamine: Asp-67 and Tyr-212. ATP is bound by residues Thr-231, 261–262 (RL), and 269–271 (LSK). The 'KMSKS' region signature appears at 268–272 (VLSKR).

It belongs to the class-I aminoacyl-tRNA synthetase family. Monomer.

The protein localises to the cytoplasm. It catalyses the reaction tRNA(Gln) + L-glutamine + ATP = L-glutaminyl-tRNA(Gln) + AMP + diphosphate. The polypeptide is Glutamine--tRNA ligase (Buchnera aphidicola subsp. Baizongia pistaciae (strain Bp)).